We begin with the raw amino-acid sequence, 261 residues long: uncharacterized protein (261 aa).

The N-terminal stretch at 1 to 22 (MIHSKKLTLGICLVLLIILIGG) is a signal peptide. The N-palmitoyl cysteine moiety is linked to residue cysteine 23. A lipid anchor (S-diacylglycerol cysteine) is attached at cysteine 23.

Belongs to the staphylococcal tandem lipoprotein family.

The protein resides in the cell membrane. This is an uncharacterized protein from Staphylococcus aureus (strain USA300).